We begin with the raw amino-acid sequence, 514 residues long: 1-pyrroline-5-carboxylate dehydrogenase (514 aa).

Residues E286 and C320 contribute to the active site.

This sequence belongs to the aldehyde dehydrogenase family. RocA subfamily.

It carries out the reaction L-glutamate 5-semialdehyde + NAD(+) + H2O = L-glutamate + NADH + 2 H(+). Its pathway is amino-acid degradation; L-proline degradation into L-glutamate; L-glutamate from L-proline: step 2/2. The sequence is that of 1-pyrroline-5-carboxylate dehydrogenase from Staphylococcus aureus (strain MSSA476).